Consider the following 225-residue polypeptide: UPF0758 protein Shew_3481 (225 aa).

An MPN domain is found at Ile-102–Ile-224. Positions 173, 175, and 186 each coordinate Zn(2+). Positions His-173–Asp-186 match the JAMM motif motif.

The protein belongs to the UPF0758 family.

In Shewanella loihica (strain ATCC BAA-1088 / PV-4), this protein is UPF0758 protein Shew_3481.